Consider the following 557-residue polypeptide: Formate--tetrahydrofolate ligase 2 (557 aa).

66 to 73 provides a ligand contact to ATP; it reads TPAGEGKT.

This sequence belongs to the formate--tetrahydrofolate ligase family.

The catalysed reaction is (6S)-5,6,7,8-tetrahydrofolate + formate + ATP = (6R)-10-formyltetrahydrofolate + ADP + phosphate. It participates in one-carbon metabolism; tetrahydrofolate interconversion. In Streptococcus pyogenes serotype M3 (strain ATCC BAA-595 / MGAS315), this protein is Formate--tetrahydrofolate ligase 2.